The following is a 259-amino-acid chain: Ferritin-4, chloroplastic (259 aa).

The transit peptide at 1–57 (MLLKTVSSSSSSALSLVNFHGVKKDVSPLLPSISSNLRVSSGKSGNLTFSFRASKSS) directs the protein to the chloroplast. Positions 58 to 90 (TTDALSGVVFEPFKEVKKELDLVPTSSHLSLAR) are extension peptide (EP). The Ferritin-like diiron domain maps to 91–244 (QKYSDECEAA…EYVAQLRRVG (154 aa)). The Fe cation site is built by Glu-108, Glu-143, His-146, Glu-192, and Gln-226.

Belongs to the ferritin family. In terms of assembly, oligomer of 24 subunits. There are two types of subunits: L (light) chain and H (heavy) chain. The major chain can be light or heavy, depending on the species and tissue type. The functional molecule forms a roughly spherical shell with a diameter of 12 nm and contains a central cavity into which the insoluble mineral iron core is deposited.

It is found in the plastid. It localises to the chloroplast. It catalyses the reaction 4 Fe(2+) + O2 + 4 H(+) = 4 Fe(3+) + 2 H2O. Stores iron in a soluble, non-toxic, readily available form. Important for iron homeostasis. Has ferroxidase activity. Iron is taken up in the ferrous form and deposited as ferric hydroxides after oxidation. The sequence is that of Ferritin-4, chloroplastic (FER4) from Arabidopsis thaliana (Mouse-ear cress).